We begin with the raw amino-acid sequence, 461 residues long: L-seryl-tRNA(Sec) selenium transferase (461 aa).

Lys-294 is subject to N6-(pyridoxal phosphate)lysine.

This sequence belongs to the SelA family. It depends on pyridoxal 5'-phosphate as a cofactor.

The protein resides in the cytoplasm. It carries out the reaction L-seryl-tRNA(Sec) + selenophosphate + H(+) = L-selenocysteinyl-tRNA(Sec) + phosphate. The protein operates within aminoacyl-tRNA biosynthesis; selenocysteinyl-tRNA(Sec) biosynthesis; selenocysteinyl-tRNA(Sec) from L-seryl-tRNA(Sec) (bacterial route): step 1/1. In terms of biological role, converts seryl-tRNA(Sec) to selenocysteinyl-tRNA(Sec) required for selenoprotein biosynthesis. This is L-seryl-tRNA(Sec) selenium transferase from Haemophilus influenzae (strain 86-028NP).